A 255-amino-acid polypeptide reads, in one-letter code: NAD-dependent protein deacylase (255 aa).

Residues 1-253 enclose the Deacetylase sirtuin-type domain; sequence MEFSDELLAS…PLLLQALRRS (253 aa). 22-42 serves as a coordination point for NAD(+); that stretch reads GAGVSAESGIPTFRDALTGFW. Substrate-binding residues include Tyr67 and Arg70. An NAD(+)-binding site is contributed by 101–104; that stretch reads QNVD. The active-site Proton acceptor is His119. Zn(2+)-binding residues include Cys127, Cys130, Cys155, and Cys158. Residues 195–197, 221–223, and Ala239 contribute to the NAD(+) site; these read GTS and NPA.

This sequence belongs to the sirtuin family. Class III subfamily. Zn(2+) serves as cofactor.

It localises to the cytoplasm. It catalyses the reaction N(6)-acetyl-L-lysyl-[protein] + NAD(+) + H2O = 2''-O-acetyl-ADP-D-ribose + nicotinamide + L-lysyl-[protein]. The enzyme catalyses N(6)-succinyl-L-lysyl-[protein] + NAD(+) + H2O = 2''-O-succinyl-ADP-D-ribose + nicotinamide + L-lysyl-[protein]. Its function is as follows. NAD-dependent lysine deacetylase and desuccinylase that specifically removes acetyl and succinyl groups on target proteins. Modulates the activities of several proteins which are inactive in their acylated form. This Methylococcus capsulatus (strain ATCC 33009 / NCIMB 11132 / Bath) protein is NAD-dependent protein deacylase.